An 839-amino-acid polypeptide reads, in one-letter code: Protein translocase subunit SecA (839 aa).

ATP contacts are provided by residues Gln85, 103–107, and Asp493; that span reads GEGKT. Positions 780-790 are enriched in basic and acidic residues; that stretch reads QIHEQERERAS. The tract at residues 780 to 839 is disordered; sequence QIHEQERERASQRATTAAPQNIQSQQSANTDDLPKVERNEACPCGSGKKFKNCHGRKSFS. Polar residues predominate over residues 791-809; it reads QRATTAAPQNIQSQQSANT. Residues Cys821, Cys823, Cys832, and His833 each contribute to the Zn(2+) site. Positions 827-839 are enriched in basic residues; the sequence is KKFKNCHGRKSFS.

Belongs to the SecA family. Monomer and homodimer. Part of the essential Sec protein translocation apparatus which comprises SecA, SecYEG and auxiliary proteins SecDF. Other proteins may also be involved. It depends on Zn(2+) as a cofactor.

The protein localises to the cell membrane. The protein resides in the cytoplasm. It catalyses the reaction ATP + H2O + cellular proteinSide 1 = ADP + phosphate + cellular proteinSide 2.. Its function is as follows. Part of the Sec protein translocase complex. Interacts with the SecYEG preprotein conducting channel. Has a central role in coupling the hydrolysis of ATP to the transfer of proteins into and across the cell membrane, serving as an ATP-driven molecular motor driving the stepwise translocation of polypeptide chains across the membrane. In Streptococcus pyogenes serotype M1, this protein is Protein translocase subunit SecA.